A 498-amino-acid polypeptide reads, in one-letter code: Glutamate--tRNA ligase (498 aa).

The 'HIGH' region motif lies at proline 12–asparagine 22. Positions lysine 259–arginine 263 match the 'KMSKS' region motif. Lysine 262 is an ATP binding site.

The protein belongs to the class-I aminoacyl-tRNA synthetase family. Glutamate--tRNA ligase type 1 subfamily. Monomer.

It is found in the cytoplasm. It catalyses the reaction tRNA(Glu) + L-glutamate + ATP = L-glutamyl-tRNA(Glu) + AMP + diphosphate. In terms of biological role, catalyzes the attachment of glutamate to tRNA(Glu) in a two-step reaction: glutamate is first activated by ATP to form Glu-AMP and then transferred to the acceptor end of tRNA(Glu). The sequence is that of Glutamate--tRNA ligase from Limosilactobacillus fermentum (strain NBRC 3956 / LMG 18251) (Lactobacillus fermentum).